The primary structure comprises 177 residues: Large ribosomal subunit protein uL6 (177 aa).

The protein belongs to the universal ribosomal protein uL6 family. Part of the 50S ribosomal subunit.

Functionally, this protein binds to the 23S rRNA, and is important in its secondary structure. It is located near the subunit interface in the base of the L7/L12 stalk, and near the tRNA binding site of the peptidyltransferase center. This is Large ribosomal subunit protein uL6 from Zymomonas mobilis subsp. mobilis (strain ATCC 31821 / ZM4 / CP4).